A 322-amino-acid polypeptide reads, in one-letter code: MTNQTVSPLFPHRHLLGIKGLSPLDILCLLDLADQEIAVSRQPEKKKSVLRGRTQINLFFEASTRTQSSFELAGKRLGADVMNMSVGNSSVKKGETLIDTAMTLNAMQPDILVIRHASAGAAALLAQKVGCSVVNAGDGAHEHPTQALLDALTIRRAKGQIENLIVAICGDVLHSRVARSNILLLNALGARVRVVAPSTLLPAGMADMSVEVFNSMEEGLKDADVVMMLRLQRERMAGSFVPSVREYFHFYGLDREKLKFAKPDALVMHPGPMNRGVEIASDVADGPQSVIQQQVEMGVAVRMAVMEALLDPRRNPGNGEPA.

The carbamoyl phosphate site is built by arginine 65 and threonine 66. Lysine 93 is an L-aspartate binding site. The carbamoyl phosphate site is built by arginine 115, histidine 143, and glutamine 146. L-aspartate is bound by residues arginine 176 and arginine 230. The carbamoyl phosphate site is built by glycine 271 and proline 272.

Belongs to the aspartate/ornithine carbamoyltransferase superfamily. ATCase family. As to quaternary structure, heterododecamer (2C3:3R2) of six catalytic PyrB chains organized as two trimers (C3), and six regulatory PyrI chains organized as three dimers (R2).

It catalyses the reaction carbamoyl phosphate + L-aspartate = N-carbamoyl-L-aspartate + phosphate + H(+). Its pathway is pyrimidine metabolism; UMP biosynthesis via de novo pathway; (S)-dihydroorotate from bicarbonate: step 2/3. Catalyzes the condensation of carbamoyl phosphate and aspartate to form carbamoyl aspartate and inorganic phosphate, the committed step in the de novo pyrimidine nucleotide biosynthesis pathway. In Brucella abortus (strain S19), this protein is Aspartate carbamoyltransferase catalytic subunit.